The following is a 47-amino-acid chain: Large ribosomal subunit protein bL34 (47 aa).

It belongs to the bacterial ribosomal protein bL34 family.

This is Large ribosomal subunit protein bL34 from Corynebacterium glutamicum (strain R).